A 682-amino-acid chain; its full sequence is Probable xyloglucan glycosyltransferase 6 (682 aa).

A run of 2 helical transmembrane segments spans residues 109-129 (LIKG…AAYF) and 173-193 (IVLF…CFWI). Asp-260 is a catalytic residue. The substrate site is built by Asp-319 and Asp-321. Asp-413 is an active-site residue. The next 2 helical transmembrane spans lie at 491-511 (LILP…TMFF) and 516-536 (LPSW…IIPA). Ser-608 bears the Phosphoserine mark. Transmembrane regions (helical) follow at residues 632–651 (LYRT…VRSL) and 657–677 (IHFY…LDLI).

This sequence belongs to the glycosyltransferase 2 family. Plant cellulose synthase-like C subfamily. As to quaternary structure, homodimer. As to expression, mainly expressed in flowers and seeds, and, to a lower extent, in seedlings, roots, leaves and stems.

It is found in the golgi apparatus membrane. Functionally, probable beta-1,4-glucan synthase rather involved in the synthesis of the xyloglucan backbone than cellulose. Seems to work simultaneously with xyloglucan 6-xylosyltransferase. Xyloglucan is a noncellulosic polysaccharides of plant cell wall and consists of a glucan backbone substituted by xylose, galactose and fucose. This Arabidopsis thaliana (Mouse-ear cress) protein is Probable xyloglucan glycosyltransferase 6.